A 503-amino-acid polypeptide reads, in one-letter code: Ribose import ATP-binding protein RbsA 1 (503 aa).

ABC transporter domains are found at residues 5-241 and 253-495; these read IALE…VGRA and IGQP…AGIE. 37 to 44 provides a ligand contact to ATP; the sequence is GENGAGKS.

Belongs to the ABC transporter superfamily. Ribose importer (TC 3.A.1.2.1) family. As to quaternary structure, the complex is composed of an ATP-binding protein (RbsA), two transmembrane proteins (RbsC) and a solute-binding protein (RbsB).

It is found in the cell inner membrane. It carries out the reaction D-ribose(out) + ATP + H2O = D-ribose(in) + ADP + phosphate + H(+). Its function is as follows. Part of the ABC transporter complex RbsABC involved in ribose import. Responsible for energy coupling to the transport system. The polypeptide is Ribose import ATP-binding protein RbsA 1 (Rhizobium meliloti (strain 1021) (Ensifer meliloti)).